The primary structure comprises 120 residues: UPF0231 protein NT01EI_0766 (120 aa).

This sequence belongs to the UPF0231 family.

This Edwardsiella ictaluri (strain 93-146) protein is UPF0231 protein NT01EI_0766.